Here is a 476-residue protein sequence, read N- to C-terminus: Proton-coupled amino acid transporter 1 (476 aa).

Residues 1–15 (MSTQRLRNEDYHDYS) show a composition bias toward basic and acidic residues. Residues 1-32 (MSTQRLRNEDYHDYSSTDVSPEESPSEGLNNL) form a disordered region. The Cytoplasmic segment spans residues 1 to 51 (MSTQRLRNEDYHDYSSTDVSPEESPSEGLNNLSSPGSYQRFGQSNSTTWFQ). The chain crosses the membrane as a helical span at residues 52–72 (TLIHLLKGNIGTGLLGLPLAV). At 73 to 78 (KNAGIV) the chain is on the extracellular side. The chain crosses the membrane as a helical span at residues 79–99 (MGPISLLIIGIVAVHCMGILV). Topologically, residues 100 to 141 (KCAHHFCRRLNKSFVDYGDTVMYGLESSPCSWLRNHAHWGRR) are cytoplasmic. The helical transmembrane segment at 142–162 (VVDFFLIVTQLGFCCVYFVFL) threads the bilayer. Over 163-190 (ADNFKQVIEAANGTTNNCHNNETVILTP) the chain is Extracellular. Asparagine 174 and asparagine 183 each carry an N-linked (GlcNAc...) asparagine glycan. Cysteine 180 and cysteine 329 are disulfide-bonded. A helical membrane pass occupies residues 191–211 (TMDSRLYMLSFLPFLVLLVFI). At 212-215 (RNLR) the chain is on the cytoplasmic side. Residues 216 to 236 (ALSIFSLLANITMLVSLVMIY) traverse the membrane as a helical segment. Over 237–257 (QFIVQRIPDPSHLPLVAPWKT) the chain is Extracellular. Residues 258-278 (YPLFFGTAIFSFEGIGMVLPL) form a helical membrane-spanning segment. Residues 279 to 289 (ENKMKDPRKFP) are Cytoplasmic-facing. Residues 290 to 310 (LILYLGMVIVTILYISLGCLG) traverse the membrane as a helical segment. The Extracellular portion of the chain corresponds to 311–342 (YLQFGANIQGSITLNLPNCWLYQSVKLLYSIG). The chain crosses the membrane as a helical span at residues 343-363 (IFFTYALQFYVPAEIIIPFFV). Residues 364-372 (SRAPEHCEL) lie on the Cytoplasmic side of the membrane. The helical transmembrane segment at 373–393 (VVDLFVRTVLVCLTCILAILI) threads the bilayer. The Extracellular portion of the chain corresponds to 394–397 (PRLD). A helical transmembrane segment spans residues 398 to 418 (LVISLVGSVSSSALALIIPPL). Residues 419-439 (LEVTTFYSEGMSPLTIFKDAL) are Cytoplasmic-facing. The helical transmembrane segment at 440–460 (ISILGFVGFVVGTYEALYELI) threads the bilayer. Residues 461–476 (QPSNAPIFINSTCAFI) are Extracellular-facing. A glycan (N-linked (GlcNAc...) asparagine) is linked at asparagine 470.

This sequence belongs to the amino acid/polyamine transporter 2 family.

It localises to the cell membrane. It is found in the apical cell membrane. The protein localises to the lysosome membrane. It carries out the reaction glycine(in) + H(+)(in) = glycine(out) + H(+)(out). It catalyses the reaction L-alanine(in) + H(+)(in) = L-alanine(out) + H(+)(out). The enzyme catalyses D-alanine(in) + H(+)(in) = D-alanine(out) + H(+)(out). The catalysed reaction is L-proline(out) + H(+)(out) = L-proline(in) + H(+)(in). It carries out the reaction D-proline(out) + H(+)(out) = D-proline(in) + H(+)(in). It catalyses the reaction D-serine(out) + H(+)(out) = D-serine(in) + H(+)(in). The enzyme catalyses L-serine(in) + H(+)(in) = L-serine(out) + H(+)(out). The catalysed reaction is 4-aminobutanoate(in) + H(+)(in) = 4-aminobutanoate(out) + H(+)(out). It carries out the reaction beta-alanine(in) + H(+)(in) = beta-alanine(out) + H(+)(out). Electrogenic proton/amino acid symporter with selectivity for small apolar L-amino acids, their D-enantiomers and selected amino acid derivatives such as 4-aminobutanoate/GABA. May be involved in the efflux from the lysosomal compartment of neutral amino acids resulting from proteolysis. May play a role in specifying sites for exocytosis in neurons. This Homo sapiens (Human) protein is Proton-coupled amino acid transporter 1.